We begin with the raw amino-acid sequence, 153 residues long: UPF0540 protein At1g62220 (153 aa).

Residues 1–21 form the signal peptide; it reads MNATKFVVLLVISVLCAIVTA. 2 disordered regions span residues 63 to 82 and 122 to 153; these read SSATGFNNPKGPDANAYENG and ARANGKVASASRVKGSSEKKKGKGKKGKGKKD. Over residues 122 to 132 the composition is skewed to low complexity; sequence ARANGKVASAS. A compositionally biased stretch (basic residues) spans 141 to 153; sequence KKGKGKKGKGKKD.

This sequence belongs to the UPF0540 family.

In Arabidopsis thaliana (Mouse-ear cress), this protein is UPF0540 protein At1g62220.